The primary structure comprises 292 residues: MKDVNILVEALPYIKKFHEKKILIKYGGHAMIDEDAMSSTVRDTVLLKYVGMEPLIVHGGGPEISRSMDKLGKEPKFIKGLRVTDEETMEIIEMVLVGKISTDIVSQISYHDGKGISLSGKDSRLIFAHKKPVSKVTSESGGEEEIDLGLVGEIDCINTDLLEMFLKNNYIPVISPVGIADDGSSLNLNADTAAGEIASSVDAEKLIILTDVPGVLRDPNDPDSLIQRIKIDEVPDLIEEGVISGGMIPKIETCVKAIEDGVKSCHIIDGRKKHSLLLEIFTKNGIGTMIYK.

Substrate-binding positions include 60–61 (GG), arginine 82, and asparagine 187.

The protein belongs to the acetylglutamate kinase family. ArgB subfamily.

Its subcellular location is the cytoplasm. It carries out the reaction N-acetyl-L-glutamate + ATP = N-acetyl-L-glutamyl 5-phosphate + ADP. Its pathway is amino-acid biosynthesis; L-arginine biosynthesis; N(2)-acetyl-L-ornithine from L-glutamate: step 2/4. Functionally, catalyzes the ATP-dependent phosphorylation of N-acetyl-L-glutamate. The chain is Acetylglutamate kinase from Methanobrevibacter smithii (strain ATCC 35061 / DSM 861 / OCM 144 / PS).